The primary structure comprises 788 residues: Multifunctional tryptophan biosynthesis protein (788 aa).

Positions 12–207 constitute a Glutamine amidotransferase type-1 domain; the sequence is DILMIDNFDS…MKLKGGTWEE (196 aa). 63–65 lines the L-glutamine pocket; sequence GPG. Cys91 acts as the Nucleophile; for GATase activity in catalysis. Residue 141 to 142 participates in L-glutamine binding; the sequence is SL. Catalysis depends on for GATase activity residues His181 and Glu183. Positions 238-503 are indole-3-glycerol phosphate synthase; it reads ILEKICAQRQ…DTRAFIRQLL (266 aa). Residues 520–788 form an N-(5'-phosphoribosyl)anthranilate isomerase region; that stretch reads LSRSCGIRTE…RAFVKAAKKL (269 aa).

The catalysed reaction is N-(5-phospho-beta-D-ribosyl)anthranilate = 1-(2-carboxyphenylamino)-1-deoxy-D-ribulose 5-phosphate. It carries out the reaction 1-(2-carboxyphenylamino)-1-deoxy-D-ribulose 5-phosphate + H(+) = (1S,2R)-1-C-(indol-3-yl)glycerol 3-phosphate + CO2 + H2O. The enzyme catalyses chorismate + L-glutamine = anthranilate + pyruvate + L-glutamate + H(+). It participates in amino-acid biosynthesis; L-tryptophan biosynthesis; L-tryptophan from chorismate: step 1/5. The protein operates within amino-acid biosynthesis; L-tryptophan biosynthesis; L-tryptophan from chorismate: step 3/5. It functions in the pathway amino-acid biosynthesis; L-tryptophan biosynthesis; L-tryptophan from chorismate: step 4/5. Trifunctional enzyme bearing the Gln amidotransferase (GATase) domain of anthranilate synthase, indole-glycerolphosphate synthase, and phosphoribosylanthranilate isomerase activities. This Phanerodontia chrysosporium (White-rot fungus) protein is Multifunctional tryptophan biosynthesis protein (TRPC).